The chain runs to 112 residues: UPF0060 membrane protein SCO3297 (112 aa).

A run of 4 helical transmembrane segments spans residues 8–28 (ALFVVAALFEIGGAWLVWQGV), 33–53 (GWLWAAGGVLALGAYGFVATF), 62–82 (ILAAYGGIFVTGSILWGVVAD), and 88–108 (RWDIAGALVCLAGMALIMWAP).

It belongs to the UPF0060 family.

The protein resides in the cell membrane. This chain is UPF0060 membrane protein SCO3297, found in Streptomyces coelicolor (strain ATCC BAA-471 / A3(2) / M145).